The primary structure comprises 308 residues: Baculoviral IAP repeat-containing protein bir-2 (308 aa).

BIR repeat units follow at residues 27-98 (RFAS…EFVM) and 170-241 (RLAT…DFIK). Zn(2+)-binding residues include Cys68, Cys71, His87, Cys94, Cys211, Cys214, His230, and Cys237.

Belongs to the IAP family.

The protein is Baculoviral IAP repeat-containing protein bir-2 of Caenorhabditis elegans.